A 402-amino-acid polypeptide reads, in one-letter code: S-adenosylmethionine synthase (402 aa).

137-142 (GQGSAD) contributes to the ATP binding site.

It belongs to the AdoMet synthase 2 family. The cofactor is Mg(2+).

The enzyme catalyses L-methionine + ATP + H2O = S-adenosyl-L-methionine + phosphate + diphosphate. It functions in the pathway amino-acid biosynthesis; S-adenosyl-L-methionine biosynthesis; S-adenosyl-L-methionine from L-methionine: step 1/1. Functionally, catalyzes the formation of S-adenosylmethionine from methionine and ATP. The polypeptide is S-adenosylmethionine synthase (Pyrobaculum neutrophilum (strain DSM 2338 / JCM 9278 / NBRC 100436 / V24Sta) (Thermoproteus neutrophilus)).